Here is a 663-residue protein sequence, read N- to C-terminus: Innate immunity activator protein (663 aa).

A disordered region spans residues 1–73; sequence MLQMPKLNEI…PGPGWDQCSP (73 aa). Over residues 23–47 the composition is skewed to low complexity; it reads EGRWAGPTGPEAARPARGARGQARG. Residues 50–59 show a composition bias toward basic and acidic residues; that stretch reads ARWDSWEHSR. Residues 117–147 adopt a coiled-coil conformation; sequence NAVRKQQRALEARLEACLEELRRLCLREAEL. The Nuclear localization signal (NLS) 1 motif lies at 164–170; the sequence is PKVRRRI. 2 disordered regions span residues 219-363 and 375-405; these read RQRK…SSLW and IRNV…QSLR. Basic and acidic residues predominate over residues 225 to 246; that stretch reads ALQEEKKLRDLQRCLGDRRRNS. A compositionally biased stretch (low complexity) spans 259–272; sequence ELSASDDSSLSDGL. Residues 282 to 298 show a composition bias toward pro residues; it reads PKPPPESPAPPSRPLPP. Basic and acidic residues predominate over residues 327 to 340; that stretch reads TSLDHPYEKPRKSS. The short motif at 332 to 338 is the Nuclear localization signal (NLS) 2 element; sequence PYEKPRK. Polar residues predominate over residues 349 to 361; sequence PATTPQDQPNPSS. The Nuclear localization signal (NLS) 3 signature appears at 422–428; sequence PRRRPTH. The tract at residues 448-483 is disordered; the sequence is PACHSCSEDSGSDVSSISHPTSPGSSSPDISFLRPL. Positions 455 to 475 are enriched in low complexity; the sequence is EDSGSDVSSISHPTSPGSSSP.

In terms of assembly, interacts with IRAK1, NOD2 and RIPK2; the interaction takes place upon PRR stimulation. Interacts with YWHAQ/14-3-3T; the interaction increases upon PRR stimulation and is required for cellular signaling pathway activation and cytokine secretion. Interacts (via N-terminal domain) with CYTH1 and CYTH2 (via their N-terminal domains). Interacts with FBXW11 and BTRC; associates with SCF E3 ubiquitin-protein ligase complexes.

Its subcellular location is the nucleus. It localises to the cytoplasm. In terms of biological role, expressed in peripheral macrophages and intestinal myeloid-derived cells, is required for optimal PRR (pattern recognition receptor)-induced signaling, cytokine secretion, and bacterial clearance. Upon stimulation of a broad range of PRRs (pattern recognition receptor) such as NOD2 or TLR2, TLR3, TLR4, TLR5, TLR7 and TLR9, associates with YWHAQ/14-3-3T, which in turn leads to the recruitment and activation of MAP kinases and NF-kappa-B signaling complexes that amplifies PRR-induced downstream signals and cytokine secretion. In the intestine, regulates adherens junction stability by regulating the degradation of CYTH1 and CYTH2, probably acting as substrate cofactor for SCF E3 ubiquitin-protein ligase complexes. Stabilizes adherens junctions by limiting CYTH1-dependent ARF6 activation. The sequence is that of Innate immunity activator protein from Mus musculus (Mouse).